Consider the following 858-residue polypeptide: MAFPAPAFSLANLLNGSYGVDTPEEVERVRSEQRDEAAAACRNYRPLPAVDVSESVPEDAHSLRTPDGAPSEEVSVEFVTYGAEDYLEKSDDELLVAFETMVKPMRIGQLWCPAFNKCSFISSIAMARALLLAPRTSHRTMKCFEDLVAAIYTKSDFYYDDECEADDVQIDISSRDVPGYSFEPWSRTSGFEPPPICEACDMIMYQCPCFDFNALKKSCAERTFADDYVIEGLDGVVNNATLSSNLGPFLVPVKCPYEKCPTPVGEIPPDLNRATDRVDINLVQSICDSTLPTHSNYDDSFHQVFVESADYSIDLDHVRLRQSDLIAKIPDSGHMIPVLNTGSGHKRVGTTKEVLTAIKKRNADVPELGDSVNLSRLSKAVAERFFISYINGNSLASSNFVNVVSNFHDYMEKWKSSGLSYDDLPDLHAENLQFYDHMIKSDVKPVVSDTLNIDRPVPATITYHKKGITSQFSPLFTALFERFQRCLRERIILPVGKISSLEMAGFDVKNKHCFEIDLSKFDKSQGEFPFKIQEHILNGLGCPAPITKWWCDFHRFSYIRDRRAGVGMPISFQRRTGDAFTYFGNTIVTMAEFAWCYDTDQFEKLLFSGDDSLGFSVLPPVGDPSKFTTLFNMEAKVMEPAVPYICSKFLLSDEFGNTFSVPDPLREVQRLGTKKIPCSDNDEFLFAHFMSFVDRLKFLDRMTQSCIDQLSLFFELKYRKSGEEAALMLGAFKKYTANFQSYKELYYSDRRQCELINSFSCVELRIERSSSTKQREKKDGIERRRNDKRRTPTGSYGGGEEAETKVSQAESTGTRSQKSQREGAFKSQAVPLPTILSSRWFGTDRDVPPCEHGGIVRV.

Positions 511 to 624 (KHCFEIDLSK…FSVLPPVGDP (114 aa)) constitute a RdRp catalytic domain. Residues 772 to 785 (TKQREKKDGIERRR) show a composition bias toward basic and acidic residues. The tract at residues 772-830 (TKQREKKDGIERRRNDKRRTPTGSYGGGEEAETKVSQAESTGTRSQKSQREGAFKSQAV) is disordered. The segment covering 805–817 (KVSQAESTGTRSQ) has biased composition (polar residues).

Belongs to the ssRNA positive-strand viruses RNA-directed RNA polymerase family. In terms of assembly, interacts with replication protein 1a.

The catalysed reaction is RNA(n) + a ribonucleoside 5'-triphosphate = RNA(n+1) + diphosphate. RNA-dependent RNA polymerase which replicates the viral genome composed of 3 RNA segments, RNA1, RNA2 and RNA3. This chain is RNA-directed RNA polymerase 2a, found in Cucumber mosaic virus (strain As) (CMV).